The following is a 766-amino-acid chain: U3 small nucleolar RNA-associated protein 14 homolog C (766 aa).

A disordered region spans residues 14–42 (HQEELVDLPKNYPLSENEDEGDSDGERKH). Phosphoserine occurs at positions 28, 51, 76, and 80. Lys121 is covalently cross-linked (Glycyl lysine isopeptide (Lys-Gly) (interchain with G-Cter in SUMO2)). A Phosphothreonine modification is found at Thr204. Coiled coils occupy residues 216-245 (LEEA…KEKK) and 316-346 (LEAR…EEEE). The interval 365–563 (MNVDGPNPWM…EQLINLQNFL (199 aa)) is disordered. A compositionally biased stretch (low complexity) spans 396 to 405 (ELAAHEVSAS). Residues Ser403 and Ser405 each carry the phosphoserine modification. Positions 407-434 (AEERPVAEEEILLREFEERQSLRKRSEL) are enriched in basic and acidic residues. Ser443 carries the phosphoserine modification. Lys447 participates in a covalent cross-link: Glycyl lysine isopeptide (Lys-Gly) (interchain with G-Cter in SUMO2). The residue at position 451 (Ser451) is a Phosphoserine. Residues 452 to 470 (QEVLSELRALSQKLKEKHQ) adopt a coiled-coil conformation. Positions 466–475 (KEKHQSRKQK) are enriched in basic residues. The segment covering 502 to 527 (RSERVQTLEELEELGKEDCFQNKELP) has biased composition (basic and acidic residues). Residue Lys517 forms a Glycyl lysine isopeptide (Lys-Gly) (interchain with G-Cter in SUMO2) linkage. The span at 533-542 (GQQSERTPNN) shows a compositional bias: polar residues. The span at 545–555 (DAPKEKKEKEQ) shows a compositional bias: basic and acidic residues. Ser567 bears the Phosphoserine mark. Lys732 participates in a covalent cross-link: Glycyl lysine isopeptide (Lys-Gly) (interchain with G-Cter in SUMO2). Positions 734-766 (EDVGYQSSSRSDLPVIQRNPKRITTRHNKEEKL) are disordered.

This sequence belongs to the UTP14 family. Expressed in testis.

It is found in the nucleus. The protein resides in the nucleolus. Functionally, essential for spermatogenesis. May be required specifically for ribosome biogenesis and hence protein synthesis during male meiosis. The polypeptide is U3 small nucleolar RNA-associated protein 14 homolog C (UTP14C) (Homo sapiens (Human)).